Consider the following 127-residue polypeptide: Mitochondrial pyruvate carrier 2 (127 aa).

The Mitochondrial matrix portion of the chain corresponds to 2 to 40 (SAAGARGLRATYHRLLDKVELMLPEKLRPLYNHPAGPRT). The helical transmembrane segment at 41-61 (VFFWAPIMKWGLVCAGLADMA) threads the bilayer. The Mitochondrial intermembrane segment spans residues 62–72 (RPAEKLSTAQS). Residues 73 to 90 (AVLMATGFIWSRYSLVII) traverse the membrane as a helical segment. At 91–95 (PKNWS) the chain is on the mitochondrial matrix side. Residues 96-115 (LFAVNFFVGAAGASQLFRIW) traverse the membrane as a helical segment. Topologically, residues 116–127 (RYNQELKAKAHK) are mitochondrial intermembrane.

This sequence belongs to the mitochondrial pyruvate carrier (MPC) (TC 2.A.105) family. Homodimer. Homooligomer. Forms heterodimers with MPC1 and MPC1L. The heterodimer is the more stable and dominant form.

It is found in the mitochondrion inner membrane. It catalyses the reaction pyruvate(out) + H(+)(out) = pyruvate(in) + H(+)(in). Functionally, mediates the uptake of pyruvate into mitochondria. The protein is Mitochondrial pyruvate carrier 2 (MPC2) of Homo sapiens (Human).